A 531-amino-acid polypeptide reads, in one-letter code: Peptide chain release factor 3 (531 aa).

One can recognise a tr-type G domain in the interval Ala-13–Lys-282. GTP is bound by residues Ser-22–Thr-29, Asp-90–His-94, and Asn-144–Asp-147.

It belongs to the TRAFAC class translation factor GTPase superfamily. Classic translation factor GTPase family. PrfC subfamily.

The protein localises to the cytoplasm. Increases the formation of ribosomal termination complexes and stimulates activities of RF-1 and RF-2. It binds guanine nucleotides and has strong preference for UGA stop codons. It may interact directly with the ribosome. The stimulation of RF-1 and RF-2 is significantly reduced by GTP and GDP, but not by GMP. The polypeptide is Peptide chain release factor 3 (Psychrobacter cryohalolentis (strain ATCC BAA-1226 / DSM 17306 / VKM B-2378 / K5)).